The following is a 156-amino-acid chain: UPF0225 protein PFLU_1319 (156 aa).

This sequence belongs to the UPF0225 family.

The polypeptide is UPF0225 protein PFLU_1319 (Pseudomonas fluorescens (strain SBW25)).